We begin with the raw amino-acid sequence, 416 residues long: Serine hydroxymethyltransferase (416 aa).

Residues Leu-121 and 125-127 (GHL) each bind (6S)-5,6,7,8-tetrahydrofolate. Lys-230 carries the post-translational modification N6-(pyridoxal phosphate)lysine.

It belongs to the SHMT family. Homodimer. Requires pyridoxal 5'-phosphate as cofactor.

The protein localises to the cytoplasm. The enzyme catalyses (6R)-5,10-methylene-5,6,7,8-tetrahydrofolate + glycine + H2O = (6S)-5,6,7,8-tetrahydrofolate + L-serine. Its pathway is one-carbon metabolism; tetrahydrofolate interconversion. It functions in the pathway amino-acid biosynthesis; glycine biosynthesis; glycine from L-serine: step 1/1. In terms of biological role, catalyzes the reversible interconversion of serine and glycine with tetrahydrofolate (THF) serving as the one-carbon carrier. This reaction serves as the major source of one-carbon groups required for the biosynthesis of purines, thymidylate, methionine, and other important biomolecules. Also exhibits THF-independent aldolase activity toward beta-hydroxyamino acids, producing glycine and aldehydes, via a retro-aldol mechanism. This is Serine hydroxymethyltransferase from Nitrosomonas eutropha (strain DSM 101675 / C91 / Nm57).